Consider the following 472-residue polypeptide: Glutamine synthetase (472 aa).

In terms of domain architecture, GS beta-grasp spans 13–101; that stretch reads SKARFVDLRF…TCDVIDPADG (89 aa). The GS catalytic domain maps to 108 to 472; the sequence is PRSIARRAEA…PLEFEMYYSL (365 aa). Positions 133 and 135 each coordinate Mg(2+). ATP is bound at residue Glu211. 2 residues coordinate Mg(2+): Glu216 and Glu224. L-glutamate contacts are provided by residues 268–269 and Gly269; that span reads NG. His273 contacts Mg(2+). Residues 275–277 and Ser277 each bind ATP; that span reads HQS. L-glutamate is bound by residues Arg325, Glu331, and Arg343. Arg343, Arg348, and Lys356 together coordinate ATP. Residue Glu361 coordinates Mg(2+). Arg363 contributes to the L-glutamate binding site. Tyr401 is subject to O-AMP-tyrosine.

Belongs to the glutamine synthetase family. As to quaternary structure, oligomer of 12 subunits arranged in the form of two hexameric ring. The cofactor is Mg(2+).

The protein localises to the cytoplasm. It catalyses the reaction L-glutamate + NH4(+) + ATP = L-glutamine + ADP + phosphate + H(+). With respect to regulation, the activity of this enzyme could be controlled by adenylation under conditions of abundant glutamine. Functionally, catalyzes the ATP-dependent biosynthesis of glutamine from glutamate and ammonia. The protein is Glutamine synthetase of Neisseria gonorrhoeae.